A 70-amino-acid polypeptide reads, in one-letter code: Large ribosomal subunit protein uL29 (70 aa).

The protein belongs to the universal ribosomal protein uL29 family.

The chain is Large ribosomal subunit protein uL29 from Rickettsia bellii (strain OSU 85-389).